A 477-amino-acid chain; its full sequence is Bifunctional protein HldE (477 aa).

The ribokinase stretch occupies residues 1–319 (MTPPLPGFRD…AALGGGPAPA (319 aa)). 195–198 (NLAE) contacts ATP. D264 is an active-site residue. Residues 346-477 (MTNGCFDLLH…DLIARIRSRG (132 aa)) are cytidylyltransferase.

The protein in the N-terminal section; belongs to the carbohydrate kinase PfkB family. In the C-terminal section; belongs to the cytidylyltransferase family. As to quaternary structure, homodimer.

It catalyses the reaction D-glycero-beta-D-manno-heptose 7-phosphate + ATP = D-glycero-beta-D-manno-heptose 1,7-bisphosphate + ADP + H(+). The enzyme catalyses D-glycero-beta-D-manno-heptose 1-phosphate + ATP + H(+) = ADP-D-glycero-beta-D-manno-heptose + diphosphate. It participates in nucleotide-sugar biosynthesis; ADP-L-glycero-beta-D-manno-heptose biosynthesis; ADP-L-glycero-beta-D-manno-heptose from D-glycero-beta-D-manno-heptose 7-phosphate: step 1/4. The protein operates within nucleotide-sugar biosynthesis; ADP-L-glycero-beta-D-manno-heptose biosynthesis; ADP-L-glycero-beta-D-manno-heptose from D-glycero-beta-D-manno-heptose 7-phosphate: step 3/4. In terms of biological role, catalyzes the phosphorylation of D-glycero-D-manno-heptose 7-phosphate at the C-1 position to selectively form D-glycero-beta-D-manno-heptose-1,7-bisphosphate. Functionally, catalyzes the ADP transfer from ATP to D-glycero-beta-D-manno-heptose 1-phosphate, yielding ADP-D-glycero-beta-D-manno-heptose. In Halorhodospira halophila (strain DSM 244 / SL1) (Ectothiorhodospira halophila (strain DSM 244 / SL1)), this protein is Bifunctional protein HldE.